The chain runs to 353 residues: Photosystem II protein D1 (353 aa).

The residue at position 2 (threonine 2) is an N-acetylthreonine. Threonine 2 is modified (phosphothreonine). The next 3 helical transmembrane spans lie at 29 to 46 (YIGWFGVLMIPTLLTATS), 118 to 133 (HFLLGVACYMGREWEL), and 142 to 156 (WIAVAYSAPVAAATA). Histidine 118 contributes to the chlorophyll a binding site. Tyrosine 126 is a binding site for pheophytin a. [CaMn4O5] cluster contacts are provided by aspartate 170 and glutamate 189. The chain crosses the membrane as a helical span at residues 197-218 (FHMLGVAGVFGGSLFSAMHGSL). Histidine 198 contributes to the chlorophyll a binding site. Residues histidine 215 and 264 to 265 (SF) each bind a quinone. Histidine 215 lines the Fe cation pocket. Position 272 (histidine 272) interacts with Fe cation. Residues 274–288 (FLAAWPVVGIWFTAL) form a helical membrane-spanning segment. Residues histidine 332, glutamate 333, aspartate 342, and alanine 344 each coordinate [CaMn4O5] cluster. A propeptide spanning residues 345 to 353 (AIEAPATNG) is cleaved from the precursor.

The protein belongs to the reaction center PufL/M/PsbA/D family. In terms of assembly, PSII is composed of 1 copy each of membrane proteins PsbA, PsbB, PsbC, PsbD, PsbE, PsbF, PsbH, PsbI, PsbJ, PsbK, PsbL, PsbM, PsbT, PsbX, PsbY, PsbZ, Psb30/Ycf12, at least 3 peripheral proteins of the oxygen-evolving complex and a large number of cofactors. It forms dimeric complexes. The D1/D2 heterodimer binds P680, chlorophylls that are the primary electron donor of PSII, and subsequent electron acceptors. It shares a non-heme iron and each subunit binds pheophytin, quinone, additional chlorophylls, carotenoids and lipids. D1 provides most of the ligands for the Mn4-Ca-O5 cluster of the oxygen-evolving complex (OEC). There is also a Cl(-1) ion associated with D1 and D2, which is required for oxygen evolution. The PSII complex binds additional chlorophylls, carotenoids and specific lipids. is required as a cofactor. In terms of processing, tyr-161 forms a radical intermediate that is referred to as redox-active TyrZ, YZ or Y-Z. Post-translationally, C-terminally processed by CTPA; processing is essential to allow assembly of the oxygen-evolving complex and thus photosynthetic growth.

It localises to the plastid membrane. It carries out the reaction 2 a plastoquinone + 4 hnu + 2 H2O = 2 a plastoquinol + O2. In terms of biological role, photosystem II (PSII) is a light-driven water:plastoquinone oxidoreductase that uses light energy to abstract electrons from H(2)O, generating O(2) and a proton gradient subsequently used for ATP formation. It consists of a core antenna complex that captures photons, and an electron transfer chain that converts photonic excitation into a charge separation. The D1/D2 (PsbA/PsbD) reaction center heterodimer binds P680, the primary electron donor of PSII as well as several subsequent electron acceptors. In Cuscuta exaltata (Tall dodder), this protein is Photosystem II protein D1.